A 64-amino-acid chain; its full sequence is Large ribosomal subunit protein bL35 (64 aa).

Residues 1 to 14 are compositionally biased toward basic residues; the sequence is MKQKTHKGTAKRVK. The interval 1-50 is disordered; it reads MKQKTHKGTAKRVKITGSGKLRREQANRRHLLEGKPSKRTRRLKGTEDVA. Positions 21-36 are enriched in basic and acidic residues; it reads LRREQANRRHLLEGKP.

The protein belongs to the bacterial ribosomal protein bL35 family.

The chain is Large ribosomal subunit protein bL35 from Corynebacterium diphtheriae (strain ATCC 700971 / NCTC 13129 / Biotype gravis).